Consider the following 204-residue polypeptide: Putative t-SNARE coiled-coil homology domain-containing protein L657 (204 aa).

T-SNARE coiled-coil homology domains are found at residues 9–71 (SDYY…MDHV) and 140–202 (DNSR…IKHT). A coiled-coil region spans residues 159–181 (VLEKQANDISNILDEQNNTLEII).

The sequence is that of Putative t-SNARE coiled-coil homology domain-containing protein L657 from Acanthamoeba polyphaga (Amoeba).